The chain runs to 169 residues: Transmembrane protein 89 (169 aa).

Residues 1-22 (MLYTLLLVPSLFLLVMPVPSQG) form the signal peptide. The Extracellular segment spans residues 23–75 (WSRPLWYQVGLDLQPWGCQPNSPDIWGCQPNSLDSCKNSLGCPGYWLGLGGNR). A helical membrane pass occupies residues 76–96 (IYPVAGVTITTTMLLVVSRVI). Residues 97–169 (VHRWRAKVAK…QIKGSPPQSG (73 aa)) are Cytoplasmic-facing.

It is found in the membrane. This chain is Transmembrane protein 89 (Tmem89), found in Mus musculus (Mouse).